Here is a 551-residue protein sequence, read N- to C-terminus: Trigger factor (551 aa).

The PPIase FKBP-type domain maps to 165 to 250; the sequence is GDLVVLDFAG…ATDVRVPGET (86 aa). Positions 442 to 551 are disordered; sequence ADDDTIGKGH…APAKKKAAAE (110 aa). Over residues 458-472 the composition is skewed to basic and acidic residues; it reads GHDHHDHDHDHDHAA. Residues 513–541 show a composition bias toward low complexity; sequence EAAPAPKKAPAKKAAAAKAEEAPAAAPKK. The segment covering 542–551 has biased composition (basic residues); sequence APAKKKAAAE.

Belongs to the FKBP-type PPIase family. Tig subfamily.

The protein localises to the cytoplasm. The enzyme catalyses [protein]-peptidylproline (omega=180) = [protein]-peptidylproline (omega=0). In terms of biological role, involved in protein export. Acts as a chaperone by maintaining the newly synthesized protein in an open conformation. Functions as a peptidyl-prolyl cis-trans isomerase. This is Trigger factor from Rhizorhabdus wittichii (strain DSM 6014 / CCUG 31198 / JCM 15750 / NBRC 105917 / EY 4224 / RW1) (Sphingomonas wittichii).